Here is a 301-residue protein sequence, read N- to C-terminus: MADQLIRATAADGGIRAVGVITTRLTEEARQRHKLSYVATAALGRTMAAGLLMASGMKRVGSRVNVRVKGDGPLAGILVDAGLDGTVRGYVGNPHIELPPNAKGKLDVGGAVGNGYLYVVRDIGYGYPYSSTVELVSGEIGDDVAHYLVTSEQTPSALMLGVFVGASGVTAAGGLLVQVLPKAARDEALVAKLESRVGALSGFTPLLQAGKTLPEIFHDLLGDMGLTIFPESQILRFHCGCSFDRVLGALKMLGEAELQDMIVKDDGAEATCDFCGRVYQASSEHLAQLIVDLQTESSVSG.

Disulfide bonds link cysteine 239/cysteine 241 and cysteine 272/cysteine 275.

Belongs to the HSP33 family. Post-translationally, under oxidizing conditions two disulfide bonds are formed involving the reactive cysteines. Under reducing conditions zinc is bound to the reactive cysteines and the protein is inactive.

The protein resides in the cytoplasm. Its function is as follows. Redox regulated molecular chaperone. Protects both thermally unfolding and oxidatively damaged proteins from irreversible aggregation. Plays an important role in the bacterial defense system toward oxidative stress. The chain is 33 kDa chaperonin from Nostoc sp. (strain PCC 7120 / SAG 25.82 / UTEX 2576).